A 161-amino-acid chain; its full sequence is Hydrogenase expression/formation protein HoxO (161 aa).

This sequence belongs to the HupG/HyaE family.

The sequence is that of Hydrogenase expression/formation protein HoxO (hoxO) from Cupriavidus necator (strain ATCC 17699 / DSM 428 / KCTC 22496 / NCIMB 10442 / H16 / Stanier 337) (Ralstonia eutropha).